We begin with the raw amino-acid sequence, 218 residues long: 2-phospho-L-lactate guanylyltransferase (218 aa).

This sequence belongs to the CofC family. Homodimer.

It catalyses the reaction (2S)-2-phospholactate + GTP + H(+) = (2S)-lactyl-2-diphospho-5'-guanosine + diphosphate. It functions in the pathway cofactor biosynthesis; coenzyme F420 biosynthesis. Guanylyltransferase that catalyzes the activation of (2S)-2-phospholactate (2-PL) as (2S)-lactyl-2-diphospho-5'-guanosine, via the condensation of 2-PL with GTP. It is involved in the biosynthesis of coenzyme F420, a hydride carrier cofactor. The sequence is that of 2-phospho-L-lactate guanylyltransferase from Methanocaldococcus fervens (strain DSM 4213 / JCM 15782 / AG86) (Methanococcus fervens).